The primary structure comprises 172 residues: Adenine phosphoribosyltransferase (172 aa).

Belongs to the purine/pyrimidine phosphoribosyltransferase family. Homodimer.

Its subcellular location is the cytoplasm. The enzyme catalyses AMP + diphosphate = 5-phospho-alpha-D-ribose 1-diphosphate + adenine. It participates in purine metabolism; AMP biosynthesis via salvage pathway; AMP from adenine: step 1/1. Catalyzes a salvage reaction resulting in the formation of AMP, that is energically less costly than de novo synthesis. The chain is Adenine phosphoribosyltransferase from Prochlorococcus marinus (strain SARG / CCMP1375 / SS120).